Reading from the N-terminus, the 446-residue chain is Phosphoglucosamine mutase (446 aa).

Ser-101 functions as the Phosphoserine intermediate in the catalytic mechanism. Ser-101, Asp-240, Asp-242, and Asp-244 together coordinate Mg(2+). A Phosphoserine modification is found at Ser-101.

This sequence belongs to the phosphohexose mutase family. Requires Mg(2+) as cofactor. Post-translationally, activated by phosphorylation.

It catalyses the reaction alpha-D-glucosamine 1-phosphate = D-glucosamine 6-phosphate. Functionally, catalyzes the conversion of glucosamine-6-phosphate to glucosamine-1-phosphate. The sequence is that of Phosphoglucosamine mutase from Coxiella burnetii (strain RSA 331 / Henzerling II).